Reading from the N-terminus, the 479-residue chain is Caspase-8 (479 aa).

The propeptide occupies 1–216 (MDFSRNLYDI…TISDSPREQD (216 aa)). DED domains follow at residues 2–80 (DFSR…TYLN) and 100–177 (AYRV…IIND). 2 positions are modified to phosphoserine: Ser188 and Ser211. An N6-acetyllysine modification is found at Lys224. Residue His317 is part of the active site. Tyr334 is modified (phosphotyrosine). Cys360 is a catalytic residue. The propeptide occupies 375 to 384 (SEEQPYLEMD). Position 380 is a phosphotyrosine; by SRC (Tyr380). Ser387 carries the phosphoserine; by CDK1 modification. (Microbial infection) ADP-riboxanated arginine is present on Arg413.

Belongs to the peptidase C14A family. In terms of assembly, heterotetramer that consists of two anti-parallel arranged heterodimers, each one formed by a 18 kDa (p18) and a 10 kDa (p10) subunit. Component of the death-induced signaling complex (DISC) composed of cell surface receptor FAS/CD95 or TNFRSF1A, adapter protein FADD and the CASP8 protease; recruitment of CASP8 to the complex is required for processing of CASP8 into the p18 and p10 subunits. Component of the AIM2 PANoptosome complex, a multiprotein complex that drives inflammatory cell death (PANoptosis). Interacts with CFLAR and PEA15. Interacts with TNFAIP8L2. Interacts with CASP8AP2. Interacts with RFFL and RNF34; negatively regulate CASP8 through proteasomal degradation. Interacts with NOL3; decreases CASP8 activity in a mitochondria localization- and phosphorylation-dependent manner and this interaction is dissociated by calcium. Interacts with UBR2ca. Interacts with RIPK1. Interacts with stimulated TNFRSF10B; this interaction is followed by CASP8 proteolytic cleavage and activation. Interacts (phosphorylated on Tyr-380) with PIK3R1. Interacts at the endoplasmic reticulum with a complex containing BCAP31, BAP29, BCL2 and/or BCL2L1. As to quaternary structure, (Microbial infection) Interacts with human cytomegalovirus/HHV-5 protein vICA/UL36; this interaction inhibits CASP8 activation. In terms of assembly, (Microbial infection) Interacts with NleF from pathogenic E.coli. (Microbial infection) Interacts with molluscum contagiosum virus protein MC160. As to quaternary structure, (Microbial infection) Interacts (via RIP homotypic interaction motif) with herpes simplex virus 1/HHV-1 protein RIR1/ICP6 (via RIP homotypic interaction motif); this interaction prevents necroptosis activation. In terms of assembly, (Microbial infection) Interacts (via RIP homotypic interaction motif) with herpes simplex virus 2/HHV-2 protein RIR1/ICP10 (via RIP homotypic interaction motif); this interaction prevents necroptosis activation. Post-translationally, generation of the p10 and p18 subunits requires association with the death-inducing signaling complex (DISC), whereas additional processing is likely due to the autocatalytic activity of the activated protease. GZMB and CASP10 can be involved in these processing events. Phosphorylation on Ser-387 during mitosis by CDK1 inhibits activation by proteolysis and prevents apoptosis. Phosphorylation on Tyr-380 by SRC is mediated by interaction with the SRC SH2 domain and does not affect dimerization or recruitment to the death-inducing signaling complex (DISC) but negatively regulates DISC-mediated processing and activation of CASP8, down-regulating its proapoptotic function. Phosphorylation on Tyr-380 also enhances localization to lamellipodia in migrating cells. In terms of processing, (Microbial infection) ADP-riboxanation by C.violaceum CopC blocks CASP8 processing, preventing CASP8 activation and ability to mediate extrinsic apoptosis. Post-translationally, (Microbial infection) Proteolytically cleaved by the cowpox virus CRMA death inhibitory protein. Isoform 1, isoform 5 and isoform 7 are expressed in a wide variety of tissues. Highest expression in peripheral blood leukocytes, spleen, thymus and liver. Barely detectable in brain, testis and skeletal muscle.

Its subcellular location is the cytoplasm. It localises to the nucleus. The protein localises to the cell projection. The protein resides in the lamellipodium. It carries out the reaction Strict requirement for Asp at position P1 and has a preferred cleavage sequence of (Leu/Asp/Val)-Glu-Thr-Asp-|-(Gly/Ser/Ala).. CASP8 activity is restricted by RIPK1. Inhibited by the effector protein NleF that is produced by pathogenic E.coli; this inhibits apoptosis. In terms of biological role, thiol protease that plays a key role in programmed cell death by acting as a molecular switch for apoptosis, necroptosis and pyroptosis, and is required to prevent tissue damage during embryonic development and adulthood. Initiator protease that induces extrinsic apoptosis by mediating cleavage and activation of effector caspases responsible for FAS/CD95-mediated and TNFRSF1A-induced cell death. Cleaves and activates effector caspases CASP3, CASP4, CASP6, CASP7, CASP9 and CASP10. Binding to the adapter molecule FADD recruits it to either receptor FAS/TNFRSF6 or TNFRSF1A. The resulting aggregate called the death-inducing signaling complex (DISC) performs CASP8 proteolytic activation. The active dimeric enzyme is then liberated from the DISC and free to activate downstream apoptotic proteases. Proteolytic fragments of the N-terminal propeptide (termed CAP3, CAP5 and CAP6) are likely retained in the DISC. In addition to extrinsic apoptosis, also acts as a negative regulator of necroptosis: acts by cleaving RIPK1 at 'Asp-324', which is crucial to inhibit RIPK1 kinase activity, limiting TNF-induced apoptosis, necroptosis and inflammatory response. Also able to initiate pyroptosis by mediating cleavage and activation of gasdermin-C and -D (GSDMC and GSDMD, respectively): gasdermin cleavage promotes release of the N-terminal moiety that binds to membranes and forms pores, triggering pyroptosis. Initiates pyroptosis following inactivation of MAP3K7/TAK1. Also acts as a regulator of innate immunity by mediating cleavage and inactivation of N4BP1 downstream of TLR3 or TLR4, thereby promoting cytokine production. May participate in the Granzyme B (GZMB) cell death pathways. Cleaves PARP1 and PARP2. Independent of its protease activity, promotes cell migration following phosphorylation at Tyr-380. Lacks the catalytic site and may interfere with the pro-apoptotic activity of the complex. Functionally, lacks the catalytic site and may interfere with the pro-apoptotic activity of the complex. Acts as an inhibitor of the caspase cascade. The sequence is that of Caspase-8 from Homo sapiens (Human).